A 1703-amino-acid polypeptide reads, in one-letter code: Stress response protein NST1 (1703 aa).

12 disordered regions span residues 1 to 91 (MAKS…AKDA), 243 to 288 (DQPL…PLPP), 347 to 484 (HALR…IWST), 566 to 724 (VSSG…GLGS), 759 to 807 (MHRE…EQRM), 843 to 1292 (LREL…LGAP), 1353 to 1407 (FSPM…IGPI), 1424 to 1465 (HTGA…DIID), 1516 to 1537 (SSFS…NGGG), 1558 to 1581 (ASTP…PWAR), 1595 to 1637 (EQPG…HHQL), and 1672 to 1703 (GAPG…GSHE). The span at 7 to 36 (PRSTPAARAAAVPPPRLAAAAQQQHHQQQP) shows a compositional bias: low complexity. The segment covering 37-48 (PSTPPAPVPPTK) has biased composition (pro residues). Polar residues predominate over residues 57 to 66 (PPRSASPVSN). The span at 77 to 86 (AKKKKKKSKS) shows a compositional bias: basic residues. Residues 253-273 (NTANNAHPTNVNGAYGQYSSS) show a composition bias toward polar residues. Pro residues predominate over residues 274 to 288 (PNPPPTQPPVEPLPP). Residues 365 to 376 (SKNKKKKKKKKG) are compositionally biased toward basic residues. Positions 384–393 (HGDDEAHEIE) are enriched in basic and acidic residues. Residues 396-409 (VPPPKPVPNHPPPS) are compositionally biased toward pro residues. 2 stretches are compositionally biased toward low complexity: residues 410–419 (TNVSSVARNS) and 453–464 (SSNSGKRSVSSS). Pro residues predominate over residues 572–581 (IPPPPGPGPF). Basic residues predominate over residues 614–650 (THTHTHAHTHTHTHTHTHTHTHAHQHPHPHPHGRKAS). Residues 657–690 (DGYDDDELDDDAEYDDDDDDADYDDEDEDDDVEL) show a composition bias toward acidic residues. The span at 691-703 (EKERAREDYDKRN) shows a compositional bias: basic and acidic residues. Residues 748–1031 (LEMMEQLAER…AKQAAAAASR (284 aa)) are a coiled coil. Positions 771–802 (ASDDEDDVDGPDDVDDEDLDEEDEDEEDEILT) are enriched in acidic residues. Composition is skewed to basic and acidic residues over residues 853 to 866 (EKAR…ESQK), 874 to 896 (QREA…EAEV), and 904 to 1023 (RDAE…REAK). Composition is skewed to low complexity over residues 1024 to 1037 (QAAA…SAAQ) and 1111 to 1135 (AGGL…AVGS). A compositionally biased stretch (pro residues) spans 1138–1148 (PAPPQGLPPRP). Positions 1158 to 1167 (SSSQTSSVSV) are enriched in low complexity. A compositionally biased stretch (polar residues) spans 1200-1219 (LNAQSNVPMPSAKTPGSSIS). Residues 1269–1291 (QNSGMFGSNGSMSSSLQSPSLGA) are compositionally biased toward low complexity. A compositionally biased stretch (low complexity) spans 1431–1444 (GRSSSTTSGSGATS). Residues 1598–1619 (GGNGVGAGSNGGTPSGLGGIGG) are compositionally biased toward gly residues.

The protein belongs to the NST1 family.

The protein localises to the cytoplasm. In terms of biological role, may act as a negative regulator of salt tolerance. This chain is Stress response protein NST1 (NST1), found in Mycosarcoma maydis (Corn smut fungus).